The chain runs to 208 residues: Probable GTP-binding protein EngB (208 aa).

The 183-residue stretch at 23–205 (LTSEMVILGR…RQTLLKYLLT (183 aa)) folds into the EngB-type G domain. Residues 31 to 38 (GRSNVGKS), 57 to 61 (GKTRL), 84 to 87 (DLPG), 154 to 157 (TKFD), and 182 to 184 (FNA) contribute to the GTP site. The Mg(2+) site is built by serine 38 and threonine 59.

Belongs to the TRAFAC class TrmE-Era-EngA-EngB-Septin-like GTPase superfamily. EngB GTPase family. Requires Mg(2+) as cofactor.

Functionally, necessary for normal cell division and for the maintenance of normal septation. This Helicobacter pylori (strain HPAG1) protein is Probable GTP-binding protein EngB.